Reading from the N-terminus, the 698-residue chain is Elongation factor G (698 aa).

One can recognise a tr-type G domain in the interval 6 to 281 (ENIRNIGICA…AVVDYLPSPI (276 aa)). GTP contacts are provided by residues 15–22 (AHIDAGKT), 79–83 (DTPGH), and 133–136 (NKMD).

The protein belongs to the TRAFAC class translation factor GTPase superfamily. Classic translation factor GTPase family. EF-G/EF-2 subfamily.

Its subcellular location is the cytoplasm. In terms of biological role, catalyzes the GTP-dependent ribosomal translocation step during translation elongation. During this step, the ribosome changes from the pre-translocational (PRE) to the post-translocational (POST) state as the newly formed A-site-bound peptidyl-tRNA and P-site-bound deacylated tRNA move to the P and E sites, respectively. Catalyzes the coordinated movement of the two tRNA molecules, the mRNA and conformational changes in the ribosome. The protein is Elongation factor G of Rickettsia bellii (strain RML369-C).